A 625-amino-acid polypeptide reads, in one-letter code: tRNA uridine 5-carboxymethylaminomethyl modification enzyme MnmG (625 aa).

Residues 9 to 14 (GGGHAG), Val121, and Ser176 contribute to the FAD site. 270–284 (GPRYCPSIEDKIYRF) is an NAD(+) binding site. FAD is bound at residue Gln367.

This sequence belongs to the MnmG family. Homodimer. Heterotetramer of two MnmE and two MnmG subunits. It depends on FAD as a cofactor.

It is found in the cytoplasm. Its function is as follows. NAD-binding protein involved in the addition of a carboxymethylaminomethyl (cmnm) group at the wobble position (U34) of certain tRNAs, forming tRNA-cmnm(5)s(2)U34. The protein is tRNA uridine 5-carboxymethylaminomethyl modification enzyme MnmG of Nitratiruptor sp. (strain SB155-2).